Here is a 109-residue protein sequence, read N- to C-terminus: T cell receptor alpha variable 27 (109 aa).

A signal peptide spans 1-19 (MVLKFSVSILWIQLAWVST). Positions 20 to 109 (QLLEQSPQFL…GDTGLYLCAG (90 aa)) constitute an Ig-like domain. N-linked (GlcNAc...) asparagine glycans are attached at residues Asn36 and Asn42. Cys41 and Cys107 are oxidised to a cystine.

In terms of assembly, alpha-beta TR is a heterodimer composed of an alpha and beta chain; disulfide-linked. The alpha-beta TR is associated with the transmembrane signaling CD3 coreceptor proteins to form the TR-CD3 (TcR or TCR). The assembly of alpha-beta TR heterodimers with CD3 occurs in the endoplasmic reticulum where a single alpha-beta TR heterodimer associates with one CD3D-CD3E heterodimer, one CD3G-CD3E heterodimer and one CD247 homodimer forming a stable octameric structure. CD3D-CD3E and CD3G-CD3E heterodimers preferentially associate with TR alpha and TR beta chains, respectively. The association of the CD247 homodimer is the last step of TcR assembly in the endoplasmic reticulum and is required for transport to the cell surface. As to quaternary structure, (Microbial infection) Interacts with Staphylococcus aureus enterotoxin H/entH.

It localises to the cell membrane. In terms of biological role, v region of the variable domain of T cell receptor (TR) alpha chain that participates in the antigen recognition. Alpha-beta T cell receptors are antigen specific receptors which are essential to the immune response and are present on the cell surface of T lymphocytes. Recognize peptide-major histocompatibility (MH) (pMH) complexes that are displayed by antigen presenting cells (APC), a prerequisite for efficient T cell adaptive immunity against pathogens. Binding of alpha-beta TR to pMH complex initiates TR-CD3 clustering on the cell surface and intracellular activation of LCK that phosphorylates the ITAM motifs of CD3G, CD3D, CD3E and CD247 enabling the recruitment of ZAP70. In turn, ZAP70 phosphorylates LAT, which recruits numerous signaling molecules to form the LAT signalosome. The LAT signalosome propagates signal branching to three major signaling pathways, the calcium, the mitogen-activated protein kinase (MAPK) kinase and the nuclear factor NF-kappa-B (NF-kB) pathways, leading to the mobilization of transcription factors that are critical for gene expression and essential for T cell growth and differentiation. The T cell repertoire is generated in the thymus, by V-(D)-J rearrangement. This repertoire is then shaped by intrathymic selection events to generate a peripheral T cell pool of self-MH restricted, non-autoaggressive T cells. Post-thymic interaction of alpha-beta TR with the pMH complexes shapes TR structural and functional avidity. This chain is T cell receptor alpha variable 27, found in Homo sapiens (Human).